The primary structure comprises 871 residues: DNA mismatch repair protein MutS (871 aa).

Residue 620–627 (GPNMGGKS) coordinates ATP. The segment at 806–837 (HHGGLNEPKQATMELTPPPEAIPSHTEKRNPL) is disordered.

This sequence belongs to the DNA mismatch repair MutS family.

In terms of biological role, this protein is involved in the repair of mismatches in DNA. It is possible that it carries out the mismatch recognition step. This protein has a weak ATPase activity. The protein is DNA mismatch repair protein MutS of Idiomarina loihiensis (strain ATCC BAA-735 / DSM 15497 / L2-TR).